A 360-amino-acid polypeptide reads, in one-letter code: Magnesium transporter NIPA2 (360 aa).

Topologically, residues 1–9 are extracellular; the sequence is MSQGHGKYD. Residues 10–30 form a helical membrane-spanning segment; sequence FYIGLGLAMSSSIFIGGSFIL. The Cytoplasmic segment spans residues 31–56; it reads KKKGLLRLARKGSTRAGQGGHAYLKE. The helical transmembrane segment at 57 to 77 threads the bilayer; the sequence is WLWWAGLLSMGAGEVANFAAY. Residue Ala78 is a topological domain, extracellular. Residues 79–99 traverse the membrane as a helical segment; it reads FAPATLVTPLGALSVLVSAIL. The Cytoplasmic segment spans residues 100-107; it reads SSYFLNER. Residues 108-128 traverse the membrane as a helical segment; the sequence is LNLHGKIGCLLSILGSTVMVI. Topologically, residues 129–149 are extracellular; sequence HAPKEEEIETLNEMSHKLGDP. A helical membrane pass occupies residues 150-170; sequence GFVVFATLVVIVSLILIFVVG. The Cytoplasmic portion of the chain corresponds to 171–175; the sequence is PRHGQ. A helical membrane pass occupies residues 176–196; it reads TNILVYITICSVIGAVSVSCA. Over 197–215 the chain is Extracellular; it reads KGLGIAIKELFAGKPVLQH. A helical membrane pass occupies residues 216-236; it reads PLTWILLLSLIVCVSTQINYL. The Cytoplasmic segment spans residues 237 to 246; it reads NRALDIFNTS. Residues 247 to 267 traverse the membrane as a helical segment; sequence IVTPIYYVFFTTSVITCSAIL. Over 268 to 278 the chain is Extracellular; sequence FKEWQDMPVDD. Residues 279–299 form a helical membrane-spanning segment; sequence VIGTLSGFFTIIVGIFLLHAF. The Cytoplasmic segment spans residues 300–360; sequence KDVSFSLSSL…SRRNGNLTAF (61 aa).

The protein belongs to the NIPA family.

It localises to the cell membrane. The protein localises to the early endosome. It catalyses the reaction Mg(2+)(in) = Mg(2+)(out). In terms of biological role, acts as a selective Mg(2+) transporter. This is Magnesium transporter NIPA2 (NIPA2) from Bos taurus (Bovine).